A 381-amino-acid chain; its full sequence is Bifunctional enzyme Fae/Hps (381 aa).

The tract at residues 1–150 (MIKFGEAVLG…KEKYRALHPL (150 aa)) is formaldehyde-activating enzyme. Residues 151-381 (VGFRDVRLEY…DEDEDIGEEL (231 aa)) are 3-hexulose-6-phosphate synthase.

It in the N-terminal section; belongs to the formaldehyde-activating enzyme family. The protein in the C-terminal section; belongs to the HPS/KGPDC family. HPS subfamily.

The catalysed reaction is 5,6,7,8-tetrahydromethanopterin + formaldehyde = 5,10-methylenetetrahydromethanopterin + H2O. The enzyme catalyses D-ribulose 5-phosphate + formaldehyde = D-arabino-hex-3-ulose 6-phosphate. Its pathway is carbohydrate biosynthesis; D-ribose 5-phosphate biosynthesis. Functionally, catalyzes the condensation of formaldehyde with tetrahydromethanopterin (H(4)MPT) to 5,10-methylenetetrahydromethanopterin. In terms of biological role, catalyzes the reversible formation of ribulose-5-phosphate and formaldehyde from 3-hexulose-6-phosphate. This Methanocaldococcus jannaschii (strain ATCC 43067 / DSM 2661 / JAL-1 / JCM 10045 / NBRC 100440) (Methanococcus jannaschii) protein is Bifunctional enzyme Fae/Hps.